A 583-amino-acid polypeptide reads, in one-letter code: Atlastin-2 (583 aa).

A disordered region spans residues 1 to 44 (MAEGDEAARGQQPHQGLWRRRRTSDPSAAVNHVSSTTSLGENYE). The tract at residues 1 to 60 (MAEGDEAARGQQPHQGLWRRRRTSDPSAAVNHVSSTTSLGENYEDDDLVNSDEVMKKPCP) is N-terminal hypervariable region (HVR). Topologically, residues 1–476 (MAEGDEAARG…NIFYAARTPA (476 aa)) are cytoplasmic. Serine 24 is modified (phosphoserine). Residues 91–336 (DLNIVVVSVA…LVPLLLAPEN (246 aa)) enclose the GB1/RHD3-type G domain. Residues arginine 104, lysine 105, glycine 106, lysine 107, serine 108, phenylalanine 109, glutamine 175, arginine 244, and aspartate 245 each contribute to the GDP site. Residues arginine 104, lysine 105, glycine 106, lysine 107, serine 108, and phenylalanine 109 each contribute to the GTP site. Serine 108 contributes to the Mg(2+) binding site. The GTP site is built by arginine 244 and aspartate 245. Positions 256–284 (LEGGKQFLEKRLQVKQNQHEELQNVRKHI) form a coiled coil. Lysine 270 bears the N6-methyllysine mark. GDP-binding residues include valine 303 and asparagine 306. Valine 303 serves as a coordination point for GTP. A 3HB (three-helix bundle) domain region spans residues 374-465 (MLQATAEANN…YANFIKHNDG (92 aa)). The linker stretch occupies residues 466 to 474 (KNIFYAART). The helical transmembrane segment at 477-497 (TLFAVMFAMYIISGLTGFIGL) threads the bilayer. At 498–499 (NS) the chain is on the lumenal side. A helical transmembrane segment spans residues 500 to 520 (IAVLCNLVMGLALIFLCTWAY). Topologically, residues 521-583 (VKYSGEFREI…VSHHARLKTD (63 aa)) are cytoplasmic. The interval 547 to 583 (KPLGDNLMEENIRQSVTNSIKAGLTDQVSHHARLKTD) is autoinhibitory domain.

It belongs to the TRAFAC class dynamin-like GTPase superfamily. GB1/RHD3 GTPase family. GB1 subfamily. In terms of assembly, monomeric and homodimeric. The homodimer, transiently formed by two molecules on opposing membranes, is the active form mediating ER membrane fusion. Interacts with REEP5 and RTN3; these proteins are involved in endoplasmic reticulum tubular network organization. Interacts with ZFYVE27; both proteins are involved in endoplasmic reticulum tubular network organization. As to expression, expressed in peripheral tissues (at protein level).

The protein localises to the endoplasmic reticulum membrane. It catalyses the reaction GTP + H2O = GDP + phosphate + H(+). With its alternative C-terminus disrupting the autoinhibitory domain, this brain-specific isoform is probably more active at fusing ER membranes. Its function is as follows. Atlastin-2 (ATL2) is a membrane-anchored GTPase that mediates the GTP-dependent fusion of endoplasmic reticulum (ER) membranes, maintaining the continuous ER network. It facilitates the formation of three-way junctions where ER tubules intersect. Two atlastin-2 on neighboring ER tubules bind GTP and form loose homodimers through the GB1/RHD3-type G domains and 3HB regions. Upon GTP hydrolysis, the 3HB regions tighten, pulling the membranes together to drive their fusion. After fusion, the homodimer disassembles upon release of inorganic phosphate (Pi). Subsequently, GDP dissociates, resetting the monomers to a conformation ready for a new fusion cycle. This is Atlastin-2 from Homo sapiens (Human).